The primary structure comprises 519 residues: Polyamine aminopropyltransferase (519 aa).

7 helical membrane passes run 17-37 (LLLV…LALV), 53-73 (LIVA…KPFL), 86-106 (LLGL…AVVG), 109-129 (LWML…ELPL), 158-178 (LGAL…LGMM), 180-200 (GAAA…CVLL), and 208-228 (QFIR…TVLV). Residues 200–463 (LRHLLPRAQF…FQLCGPEGTE (264 aa)) are spermidine synthase. In terms of domain architecture, PABS spans 225–459 (TVLVRSDGIV…GDWGFQLCGP (235 aa)). Residue glutamine 255 coordinates S-methyl-5'-thioadenosine. Residue aspartate 307 coordinates spermidine. S-methyl-5'-thioadenosine contacts are provided by residues glutamate 326 and 358–359 (DA). The active-site Proton acceptor is aspartate 379.

This sequence belongs to the spermidine/spermine synthase family. Homodimer or homotetramer.

It localises to the cell membrane. The enzyme catalyses S-adenosyl 3-(methylsulfanyl)propylamine + putrescine = S-methyl-5'-thioadenosine + spermidine + H(+). The protein operates within amine and polyamine biosynthesis; spermidine biosynthesis; spermidine from putrescine: step 1/1. In terms of biological role, catalyzes the irreversible transfer of a propylamine group from the amino donor S-adenosylmethioninamine (decarboxy-AdoMet) to putrescine (1,4-diaminobutane) to yield spermidine. In Corynebacterium efficiens (strain DSM 44549 / YS-314 / AJ 12310 / JCM 11189 / NBRC 100395), this protein is Polyamine aminopropyltransferase.